Consider the following 212-residue polypeptide: Protein G1-like7 (212 aa).

Residues 1 to 22 (MDPSGPGPSSAAAGGAPAVAAA) show a composition bias toward low complexity. Disordered stretches follow at residues 1–34 (MDPS…RYES) and 148–212 (KARG…PSAS). The 128-residue stretch at 31–158 (RYESQKRRDW…ARGIPYEKKK (128 aa)) folds into the ALOG domain. The Nuclear localization signal motif lies at 156–160 (KKKRK). The segment covering 167–182 (PAGVEPSGSSSAAAAA) has biased composition (low complexity). The span at 183–194 (AGGGDAGSGGGA) shows a compositional bias: gly residues. Positions 195-212 (AATTTAQPGGSGTAPSAS) are enriched in low complexity.

Belongs to the plant homeotic and developmental regulators ALOG protein family.

The protein resides in the nucleus. In terms of biological role, probable transcription regulator that acts as a developmental regulator by promoting cell growth in response to light. In Oryza sativa subsp. japonica (Rice), this protein is Protein G1-like7 (G1L7).